The following is a 321-amino-acid chain: Coiled-coil domain-containing protein 42-like 1 (321 aa).

Coiled-coil stretches lie at residues 36 to 144 (IRRL…EKCH) and 202 to 229 (IVQF…WELR).

Belongs to the CFAP73 family.

The polypeptide is Coiled-coil domain-containing protein 42-like 1 (Xenopus laevis (African clawed frog)).